A 161-amino-acid polypeptide reads, in one-letter code: Ribosome maturation factor RimP (161 aa).

It belongs to the RimP family.

Its subcellular location is the cytoplasm. Required for maturation of 30S ribosomal subunits. In Rickettsia africae (strain ESF-5), this protein is Ribosome maturation factor RimP.